We begin with the raw amino-acid sequence, 166 residues long: Phosphopantetheine adenylyltransferase (166 aa).

T9 lines the substrate pocket. Residues 9–10 (TF) and H17 contribute to the ATP site. Residues K41, L78, and R92 each contribute to the substrate site. Residues 93–95 (GLR), E103, and 128–134 (HQAIASK) contribute to the ATP site.

The protein belongs to the bacterial CoaD family. As to quaternary structure, homohexamer. Requires Mg(2+) as cofactor.

The protein localises to the cytoplasm. It catalyses the reaction (R)-4'-phosphopantetheine + ATP + H(+) = 3'-dephospho-CoA + diphosphate. It functions in the pathway cofactor biosynthesis; coenzyme A biosynthesis; CoA from (R)-pantothenate: step 4/5. Functionally, reversibly transfers an adenylyl group from ATP to 4'-phosphopantetheine, yielding dephospho-CoA (dPCoA) and pyrophosphate. This is Phosphopantetheine adenylyltransferase from Roseobacter denitrificans (strain ATCC 33942 / OCh 114) (Erythrobacter sp. (strain OCh 114)).